The sequence spans 229 residues: UPF0758 protein Caur_3603 (229 aa).

The MPN domain maps to Pro-105–Gly-227. Residues His-176, His-178, and Asp-189 each coordinate Zn(2+). Positions His-176–Asp-189 match the JAMM motif motif.

The protein belongs to the UPF0758 family.

The protein is UPF0758 protein Caur_3603 of Chloroflexus aurantiacus (strain ATCC 29366 / DSM 635 / J-10-fl).